Here is a 580-residue protein sequence, read N- to C-terminus: Pentatricopeptide repeat-containing protein At5g10690 (580 aa).

9 PPR repeats span residues 76–110 (NTIVMNSVLEACVHCGNIDLALRMFHEMAEPGGIG), 112–142 (DSISYATILKGLGKARRIDEAFQMLETIEYG), 151–181 (SSSLIYGLLDALINAGDLRRANGLLARYDIL), 189–223 (SVLIYNLLMKGYVNSESPQAAINLLDEMLRLRLEP), 224–254 (DRLTYNTLIHACIKCGDLDAAMKFFNDMKEK), 266–296 (DVVTYTTLVKGFGDATDLLSLQEIFLEMKLC), 302–337 (DRTAFTAVVDAMLKCGSTSGALCVFGEILKRSGANE), 342–376 (KPHLYLSMMRAFAVQGDYGMVRNLYLRLWPDSSGS), and 382–417 (QQEADNLLMEAALNDGQLDEALGILLSIVRRWKTIP). A CBS domain is found at 486–553 (VPIVDDRGSC…IVVHCGNFSG (68 aa)).

This sequence belongs to the PPR family. P subfamily.

The polypeptide is Pentatricopeptide repeat-containing protein At5g10690 (CBSPPR1) (Arabidopsis thaliana (Mouse-ear cress)).